The following is a 341-amino-acid chain: Glycerol-3-phosphate dehydrogenase [NAD(P)+] (341 aa).

NADPH is bound by residues serine 11, tryptophan 12, arginine 32, and lysine 106. The sn-glycerol 3-phosphate site is built by lysine 106, glycine 137, and threonine 139. Alanine 141 is a binding site for NADPH. Lysine 192, aspartate 245, serine 255, arginine 256, and asparagine 257 together coordinate sn-glycerol 3-phosphate. The active-site Proton acceptor is the lysine 192. Arginine 256 lines the NADPH pocket. NADPH is bound by residues valine 280 and glutamate 282.

Belongs to the NAD-dependent glycerol-3-phosphate dehydrogenase family.

Its subcellular location is the cytoplasm. The catalysed reaction is sn-glycerol 3-phosphate + NAD(+) = dihydroxyacetone phosphate + NADH + H(+). It carries out the reaction sn-glycerol 3-phosphate + NADP(+) = dihydroxyacetone phosphate + NADPH + H(+). Its pathway is membrane lipid metabolism; glycerophospholipid metabolism. In terms of biological role, catalyzes the reduction of the glycolytic intermediate dihydroxyacetone phosphate (DHAP) to sn-glycerol 3-phosphate (G3P), the key precursor for phospholipid synthesis. This is Glycerol-3-phosphate dehydrogenase [NAD(P)+] from Exiguobacterium sp. (strain ATCC BAA-1283 / AT1b).